Here is a 388-residue protein sequence, read N- to C-terminus: Succinate--CoA ligase [ADP-forming] subunit beta (388 aa).

Positions 9–243 (KQLFHRYGIP…ESQLAPLEVR (235 aa)) constitute an ATP-grasp domain. Residues lysine 45, 52-54 (GRG), glutamate 98, valine 101, and glutamate 106 contribute to the ATP site. Residues asparagine 198 and aspartate 212 each coordinate Mg(2+). Residues asparagine 263 and 320–322 (GIM) contribute to the substrate site.

It belongs to the succinate/malate CoA ligase beta subunit family. As to quaternary structure, heterotetramer of two alpha and two beta subunits. It depends on Mg(2+) as a cofactor.

It catalyses the reaction succinate + ATP + CoA = succinyl-CoA + ADP + phosphate. The catalysed reaction is GTP + succinate + CoA = succinyl-CoA + GDP + phosphate. It functions in the pathway carbohydrate metabolism; tricarboxylic acid cycle; succinate from succinyl-CoA (ligase route): step 1/1. In terms of biological role, succinyl-CoA synthetase functions in the citric acid cycle (TCA), coupling the hydrolysis of succinyl-CoA to the synthesis of either ATP or GTP and thus represents the only step of substrate-level phosphorylation in the TCA. The beta subunit provides nucleotide specificity of the enzyme and binds the substrate succinate, while the binding sites for coenzyme A and phosphate are found in the alpha subunit. This chain is Succinate--CoA ligase [ADP-forming] subunit beta, found in Syntrophotalea carbinolica (strain DSM 2380 / NBRC 103641 / GraBd1) (Pelobacter carbinolicus).